The chain runs to 271 residues: ATP synthase subunit a (271 aa).

A run of 5 helical transmembrane segments spans residues 47-67 (WENI…AYLG), 107-127 (FLGT…VPLM), 133-153 (SLNI…FLNI), 209-229 (ILIG…ETFV), and 235-255 (LPFM…FTLL).

The protein belongs to the ATPase A chain family. In terms of assembly, F-type ATPases have 2 components, CF(1) - the catalytic core - and CF(0) - the membrane proton channel. CF(1) has five subunits: alpha(3), beta(3), gamma(1), delta(1), epsilon(1). CF(0) has three main subunits: a(1), b(2) and c(9-12). The alpha and beta chains form an alternating ring which encloses part of the gamma chain. CF(1) is attached to CF(0) by a central stalk formed by the gamma and epsilon chains, while a peripheral stalk is formed by the delta and b chains.

The protein localises to the cell inner membrane. Its function is as follows. Key component of the proton channel; it plays a direct role in the translocation of protons across the membrane. This is ATP synthase subunit a from Protochlamydia amoebophila (strain UWE25).